The chain runs to 274 residues: Undecaprenyl-diphosphatase 1 (274 aa).

7 helical membrane passes run 47 to 67 (QVFL…LYFN), 85 to 105 (VSMW…GIPF), 113 to 133 (FYNY…FIMI), 150 to 170 (ITYT…VFPG), 196 to 216 (FFLA…KFGL), 225 to 245 (ILFI…KFLM), and 253 to 273 (FKAF…YFLI).

Belongs to the UppP family.

Its subcellular location is the cell membrane. It catalyses the reaction di-trans,octa-cis-undecaprenyl diphosphate + H2O = di-trans,octa-cis-undecaprenyl phosphate + phosphate + H(+). Functionally, catalyzes the dephosphorylation of undecaprenyl diphosphate (UPP). Confers resistance to bacitracin. In Clostridium acetobutylicum (strain ATCC 824 / DSM 792 / JCM 1419 / IAM 19013 / LMG 5710 / NBRC 13948 / NRRL B-527 / VKM B-1787 / 2291 / W), this protein is Undecaprenyl-diphosphatase 1.